Here is a 441-residue protein sequence, read N- to C-terminus: Tol-Pal system protein TolB (441 aa).

Residues 1 to 39 form the signal peptide; sequence MPAMTPAFRRADLTGFLRTYGAALILLLAAMLAWQPAQA.

The protein belongs to the TolB family. The Tol-Pal system is composed of five core proteins: the inner membrane proteins TolA, TolQ and TolR, the periplasmic protein TolB and the outer membrane protein Pal. They form a network linking the inner and outer membranes and the peptidoglycan layer.

Its subcellular location is the periplasm. Functionally, part of the Tol-Pal system, which plays a role in outer membrane invagination during cell division and is important for maintaining outer membrane integrity. The chain is Tol-Pal system protein TolB from Bordetella parapertussis (strain 12822 / ATCC BAA-587 / NCTC 13253).